A 597-amino-acid polypeptide reads, in one-letter code: Gamma-terpinene synthase, chloroplastic (597 aa).

The N-terminal 47 residues, 1 to 47, are a transit peptide targeting the chloroplast; it reads MATLSMQVSILSKQVKNLNSFGMRASKLPMVARRVDVSTTRLRPICS. Positions 350 and 354 each coordinate Mn(2+). Positions 350–354 match the DDXXD motif motif; that stretch reads DDVYD. Homodimerization regions lie at residues 356 to 362 and 428 to 464; these read YGTLDEL and EAKW…YFTL. Residues D494 and E502 each coordinate Mn(2+).

It belongs to the terpene synthase family. As to quaternary structure, homodimer. Mn(2+) is required as a cofactor. The cofactor is Mg(2+).

It is found in the plastid. Its subcellular location is the chloroplast. The enzyme catalyses (2E)-geranyl diphosphate = gamma-terpinene + diphosphate. It participates in secondary metabolite biosynthesis; terpenoid biosynthesis. In terms of biological role, involved in the biosynthesis of phenolic monoterpenes natural products thymol and carvacrol which have a broad range of biological activities acting as antimicrobial compounds, insecticides, antioxidants and pharmaceutical agents. Monoterpene synthase which catalyzes the conversion of geranyl diphosphate (GPP) to gamma-terpinene. This chain is Gamma-terpinene synthase, chloroplastic, found in Thymus caespititius (Cretan thyme).